The primary structure comprises 158 residues: NADH-quinone oxidoreductase subunit B (158 aa).

[4Fe-4S] cluster contacts are provided by Cys-37, Cys-38, Cys-102, and Cys-132.

It belongs to the complex I 20 kDa subunit family. In terms of assembly, NDH-1 is composed of 14 different subunits. Subunits NuoB, C, D, E, F, and G constitute the peripheral sector of the complex. [4Fe-4S] cluster serves as cofactor.

Its subcellular location is the cell inner membrane. It carries out the reaction a quinone + NADH + 5 H(+)(in) = a quinol + NAD(+) + 4 H(+)(out). NDH-1 shuttles electrons from NADH, via FMN and iron-sulfur (Fe-S) centers, to quinones in the respiratory chain. The immediate electron acceptor for the enzyme in this species is believed to be ubiquinone. Couples the redox reaction to proton translocation (for every two electrons transferred, four hydrogen ions are translocated across the cytoplasmic membrane), and thus conserves the redox energy in a proton gradient. In Halorhodospira halophila (strain DSM 244 / SL1) (Ectothiorhodospira halophila (strain DSM 244 / SL1)), this protein is NADH-quinone oxidoreductase subunit B.